A 577-amino-acid chain; its full sequence is DNA-directed RNA polymerase subunit alpha (577 aa).

An alpha N-terminal domain (alpha-NTD) region spans residues 1-461; that stretch reads MIKIIIKETF…QLFLPLQQIR (461 aa). Positions 510 to 577 are alpha C-terminal domain (alpha-CTD); sequence FDHRLLELDI…ALQLMKLTLK (68 aa).

The protein belongs to the RNA polymerase alpha chain family. As to quaternary structure, in plastids the minimal PEP RNA polymerase catalytic core is composed of four subunits: alpha, beta, beta', and beta''. When a (nuclear-encoded) sigma factor is associated with the core the holoenzyme is formed, which can initiate transcription.

The protein localises to the plastid. It is found in the chloroplast. The enzyme catalyses RNA(n) + a ribonucleoside 5'-triphosphate = RNA(n+1) + diphosphate. Its function is as follows. DNA-dependent RNA polymerase catalyzes the transcription of DNA into RNA using the four ribonucleoside triphosphates as substrates. The polypeptide is DNA-directed RNA polymerase subunit alpha (Tupiella akineta (Green alga)).